Reading from the N-terminus, the 397-residue chain is tRNA-specific 2-thiouridylase MnmA (397 aa).

ATP is bound by residues 6 to 13 and L32; that span reads AMSGGVDS. C101 acts as the Nucleophile in catalysis. C101 and C199 form a disulfide bridge. An ATP-binding site is contributed by G125. The interval 148–150 is interaction with tRNA; it reads KDQ. Catalysis depends on C199, which acts as the Cysteine persulfide intermediate.

It belongs to the MnmA/TRMU family.

It is found in the cytoplasm. It carries out the reaction S-sulfanyl-L-cysteinyl-[protein] + uridine(34) in tRNA + AH2 + ATP = 2-thiouridine(34) in tRNA + L-cysteinyl-[protein] + A + AMP + diphosphate + H(+). Catalyzes the 2-thiolation of uridine at the wobble position (U34) of tRNA, leading to the formation of s(2)U34. The protein is tRNA-specific 2-thiouridylase MnmA of Clavibacter sepedonicus (Clavibacter michiganensis subsp. sepedonicus).